The chain runs to 288 residues: Ninja-family protein 6 (288 aa).

Disordered regions lie at residues 1 to 50 (MASR…KRPR) and 66 to 207 (LHAD…TRTG). The segment covering 12 to 23 (AGEGAGPPGDAG) has biased composition (gly residues). The span at 76–86 (LPLLRTTSLPT) shows a compositional bias: low complexity. Over residues 91-103 (ERWRRREMQSRRR) the composition is skewed to basic and acidic residues. Polar residues predominate over residues 131 to 173 (RRSNASQGSNSASTTEQGIGGSMFNQSADAKSPSTSDNRNQND). Residues 195–207 (RLRTLGSLTTRTG) are compositionally biased toward low complexity.

The protein belongs to the Ninja family.

It localises to the nucleus. The chain is Ninja-family protein 6 from Zea mays (Maize).